We begin with the raw amino-acid sequence, 95 residues long: Large ribosomal subunit protein uL23 (95 aa).

The protein belongs to the universal ribosomal protein uL23 family. Part of the 50S ribosomal subunit. Contacts protein L29, and trigger factor when it is bound to the ribosome.

In terms of biological role, one of the early assembly proteins it binds 23S rRNA. One of the proteins that surrounds the polypeptide exit tunnel on the outside of the ribosome. Forms the main docking site for trigger factor binding to the ribosome. This chain is Large ribosomal subunit protein uL23, found in Coxiella burnetii (strain RSA 493 / Nine Mile phase I).